The sequence spans 297 residues: Acetylglutamate kinase (297 aa).

Substrate is bound by residues 72–73 (GG), arginine 94, and asparagine 187.

The protein belongs to the acetylglutamate kinase family. ArgB subfamily.

It localises to the cytoplasm. The enzyme catalyses N-acetyl-L-glutamate + ATP = N-acetyl-L-glutamyl 5-phosphate + ADP. It functions in the pathway amino-acid biosynthesis; L-arginine biosynthesis; N(2)-acetyl-L-ornithine from L-glutamate: step 2/4. Its function is as follows. Catalyzes the ATP-dependent phosphorylation of N-acetyl-L-glutamate. The protein is Acetylglutamate kinase of Synechocystis sp. (strain ATCC 27184 / PCC 6803 / Kazusa).